The chain runs to 287 residues: Urease accessory protein UreD (287 aa).

This sequence belongs to the UreD family. In terms of assembly, ureD, UreF and UreG form a complex that acts as a GTP-hydrolysis-dependent molecular chaperone, activating the urease apoprotein by helping to assemble the nickel containing metallocenter of UreC. The UreE protein probably delivers the nickel.

It is found in the cytoplasm. Its function is as follows. Required for maturation of urease via the functional incorporation of the urease nickel metallocenter. This chain is Urease accessory protein UreD, found in Aliivibrio fischeri (strain ATCC 700601 / ES114) (Vibrio fischeri).